Reading from the N-terminus, the 260-residue chain is CD40 ligand (260 aa).

The Cytoplasmic segment spans residues 1–22 (MIETYSQTAPRSVATGPPVSMK). The chain crosses the membrane as a helical; Signal-anchor for type II membrane protein span at residues 23 to 46 (IFMYLLTVFLITQMIGSALFAVYL). Residues 47–260 (HRRLDKIEDE…GFTSFGLLKL (214 aa)) are Extracellular-facing. The region spanning 121–260 (IAAHVISEAS…GFTSFGLLKL (140 aa)) is the THD domain. A disulfide bridge links Cys177 with Cys217. A glycan (N-linked (GlcNAc...) asparagine) is linked at Asn239.

The protein belongs to the tumor necrosis factor family. Homotrimer. Interacts with CD28. CD40 ligand, soluble form: Exists as either a monomer or a homotrimer. Forms a ternary complex between CD40 and integrins for CD40-CD40LG signaling. The soluble form derives from the membrane form by proteolytic processing.

It is found in the cell membrane. The protein resides in the cell surface. It localises to the secreted. Cytokine that acts as a ligand to CD40/TNFRSF5. Costimulates T-cell proliferation and cytokine production. Its cross-linking on T-cells generates a costimulatory signal which enhances the production of IL4 and IL10 in conjunction with the TCR/CD3 ligation and CD28 costimulation. Induces the activation of NF-kappa-B. Induces the activation of kinases MAPK8 and PAK2 in T-cells. Mediates B-cell proliferation in the absence of co-stimulus as well as IgE production in the presence of IL4. Involved in immunoglobulin class switching. Its function is as follows. Acts as a ligand for integrins, specifically ITGA5:ITGB1 and ITGAV:ITGB3; both integrins and the CD40 receptor are required for activation of CD40-CD40LG signaling, which have cell-type dependent effects, such as B-cell activation, NF-kappa-B signaling and anti-apoptotic signaling. The protein is CD40 ligand (CD40LG) of Canis lupus familiaris (Dog).